A 105-amino-acid polypeptide reads, in one-letter code: Guanidinium exporter (105 aa).

A helical membrane pass occupies residues 1 to 21 (MSWIILLIAGLLEVVWAVGLK). The Cytoplasmic portion of the chain corresponds to 22 to 28 (YTHGFSR). A helical transmembrane segment spans residues 29 to 49 (LTPSIITITAMVISMALLSWA). Topologically, residues 50–57 (MKTLPVGT) are periplasmic. A helical transmembrane segment spans residues 58–78 (AYAIWTGIGAVGAAITGILLL). Residues 79–81 (GES) are Cytoplasmic-facing. Residues 82 to 102 (ASPARLLSLGLIVAGIIGLKL) form a helical membrane-spanning segment. The Periplasmic segment spans residues 103–105 (SAH).

The protein belongs to the drug/metabolite transporter (DMT) superfamily. Small multidrug resistance (SMR) (TC 2.A.7.1) family. Gdx/SugE subfamily.

The protein localises to the cell inner membrane. Its function is as follows. Guanidinium ion exporter. Couples guanidinium export to the proton motive force, exchanging one guanidinium ion for two protons. The chain is Guanidinium exporter from Salmonella typhi.